The primary structure comprises 235 residues: Aspartate/glutamate leucyltransferase (235 aa).

The protein belongs to the R-transferase family. Bpt subfamily.

It localises to the cytoplasm. It carries out the reaction N-terminal L-glutamyl-[protein] + L-leucyl-tRNA(Leu) = N-terminal L-leucyl-L-glutamyl-[protein] + tRNA(Leu) + H(+). The enzyme catalyses N-terminal L-aspartyl-[protein] + L-leucyl-tRNA(Leu) = N-terminal L-leucyl-L-aspartyl-[protein] + tRNA(Leu) + H(+). In terms of biological role, functions in the N-end rule pathway of protein degradation where it conjugates Leu from its aminoacyl-tRNA to the N-termini of proteins containing an N-terminal aspartate or glutamate. This is Aspartate/glutamate leucyltransferase from Shewanella putrefaciens (strain CN-32 / ATCC BAA-453).